A 184-amino-acid chain; its full sequence is Phosducin-like protein 3 (184 aa).

Positions 45–184 (HGELKEIDEQ…VKNNKFKEDD (140 aa)) are thioredoxin fold.

The protein belongs to the phosducin family.

The chain is Phosducin-like protein 3 (phlp3) from Dictyostelium discoideum (Social amoeba).